Consider the following 279-residue polypeptide: NH(3)-dependent NAD(+) synthetase (279 aa).

46-53 (GISGGQDS) contacts ATP. Mg(2+) is bound at residue aspartate 52. Arginine 145 contacts deamido-NAD(+). Threonine 165 contacts ATP. Glutamate 170 contributes to the Mg(2+) binding site. Deamido-NAD(+)-binding residues include lysine 178 and aspartate 185. ATP-binding residues include lysine 194 and threonine 216. Position 265–266 (265–266 (HK)) interacts with deamido-NAD(+).

This sequence belongs to the NAD synthetase family. In terms of assembly, homodimer.

The enzyme catalyses deamido-NAD(+) + NH4(+) + ATP = AMP + diphosphate + NAD(+) + H(+). The protein operates within cofactor biosynthesis; NAD(+) biosynthesis; NAD(+) from deamido-NAD(+) (ammonia route): step 1/1. Catalyzes the ATP-dependent amidation of deamido-NAD to form NAD. Uses ammonia as a nitrogen source. This Rhodococcus opacus (strain B4) protein is NH(3)-dependent NAD(+) synthetase.